The following is a 421-amino-acid chain: Medium-chain specific acyl-CoA dehydrogenase, mitochondrial (421 aa).

The transit peptide at 1–25 (MAAGFGRCCRVLRSISRFHWRSQHT) directs the protein to the mitochondrion. K69 bears the N6-acetyllysine; alternate mark. Position 69 is an N6-succinyllysine; alternate (K69). 158-167 (YCVTEPGAGS) contacts FAD. S167 lines the octanoyl-CoA pocket. An N6-succinyllysine modification is found at K179. 191–193 (WIT) provides a ligand contact to FAD. 4 positions are modified to N6-acetyllysine; alternate: K212, K217, K259, and K271. Residues K212, K217, K259, and K271 each carry the N6-succinyllysine; alternate modification. D278 is an octanoyl-CoA binding site. K279 carries the post-translational modification N6-acetyllysine. Residue R281 participates in octanoyl-CoA binding. At K301 the chain carries N6-acetyllysine. Residues 306–308 (RKT) and 316–317 (HQ) each bind FAD. T351 carries the phosphothreonine modification. FAD-binding positions include 374-378 (QILGG) and 401-405 (EGTSQ). E401 contacts octanoyl-CoA. Catalysis depends on E401, which acts as the Proton acceptor.

The protein belongs to the acyl-CoA dehydrogenase family. Homotetramer. Interacts with the heterodimeric electron transfer flavoprotein ETF. It depends on FAD as a cofactor. Acetylated. Could occur at proximity of the cofactor-binding sites and reduce the catalytic activity. Could be deacetylated by SIRT3.

It localises to the mitochondrion matrix. The enzyme catalyses a medium-chain 2,3-saturated fatty acyl-CoA + oxidized [electron-transfer flavoprotein] + H(+) = a medium-chain (2E)-enoyl-CoA + reduced [electron-transfer flavoprotein]. It catalyses the reaction pentanoyl-CoA + oxidized [electron-transfer flavoprotein] + H(+) = (2E)-pentenoyl-CoA + reduced [electron-transfer flavoprotein]. The catalysed reaction is hexanoyl-CoA + oxidized [electron-transfer flavoprotein] + H(+) = (2E)-hexenoyl-CoA + reduced [electron-transfer flavoprotein]. It carries out the reaction octanoyl-CoA + oxidized [electron-transfer flavoprotein] + H(+) = (2E)-octenoyl-CoA + reduced [electron-transfer flavoprotein]. The enzyme catalyses decanoyl-CoA + oxidized [electron-transfer flavoprotein] + H(+) = (2E)-decenoyl-CoA + reduced [electron-transfer flavoprotein]. It catalyses the reaction dodecanoyl-CoA + oxidized [electron-transfer flavoprotein] + H(+) = (2E)-dodecenoyl-CoA + reduced [electron-transfer flavoprotein]. The catalysed reaction is tetradecanoyl-CoA + oxidized [electron-transfer flavoprotein] + H(+) = (2E)-tetradecenoyl-CoA + reduced [electron-transfer flavoprotein]. It carries out the reaction oxidized [electron-transfer flavoprotein] + hexadecanoyl-CoA + H(+) = (2E)-hexadecenoyl-CoA + reduced [electron-transfer flavoprotein]. It participates in lipid metabolism; mitochondrial fatty acid beta-oxidation. Functionally, medium-chain specific acyl-CoA dehydrogenase is one of the acyl-CoA dehydrogenases that catalyze the first step of mitochondrial fatty acid beta-oxidation, an aerobic process breaking down fatty acids into acetyl-CoA and allowing the production of energy from fats. The first step of fatty acid beta-oxidation consists in the removal of one hydrogen from C-2 and C-3 of the straight-chain fatty acyl-CoA thioester, resulting in the formation of trans-2-enoyl-CoA. Electron transfer flavoprotein (ETF) is the electron acceptor that transfers electrons to the main mitochondrial respiratory chain via ETF-ubiquinone oxidoreductase (ETF dehydrogenase). Among the different mitochondrial acyl-CoA dehydrogenases, medium-chain specific acyl-CoA dehydrogenase acts specifically on acyl-CoAs with saturated 6 to 12 carbons long primary chains. This is Medium-chain specific acyl-CoA dehydrogenase, mitochondrial from Homo sapiens (Human).